Consider the following 477-residue polypeptide: Bifunctional protein HldE (477 aa).

The interval 1–318 (MKVTLPEFER…ENAVRGRADT (318 aa)) is ribokinase. An N6-acetyllysine modification is found at Lys-179. 195–198 (NLSE) contacts ATP. Asp-264 is a catalytic residue. A cytidylyltransferase region spans residues 344–477 (MTNGVFDILH…IKKIQQDKKG (134 aa)).

It in the N-terminal section; belongs to the carbohydrate kinase PfkB family. This sequence in the C-terminal section; belongs to the cytidylyltransferase family. Homodimer.

It catalyses the reaction D-glycero-beta-D-manno-heptose 7-phosphate + ATP = D-glycero-beta-D-manno-heptose 1,7-bisphosphate + ADP + H(+). The enzyme catalyses D-glycero-beta-D-manno-heptose 1-phosphate + ATP + H(+) = ADP-D-glycero-beta-D-manno-heptose + diphosphate. The protein operates within nucleotide-sugar biosynthesis; ADP-L-glycero-beta-D-manno-heptose biosynthesis; ADP-L-glycero-beta-D-manno-heptose from D-glycero-beta-D-manno-heptose 7-phosphate: step 1/4. It functions in the pathway nucleotide-sugar biosynthesis; ADP-L-glycero-beta-D-manno-heptose biosynthesis; ADP-L-glycero-beta-D-manno-heptose from D-glycero-beta-D-manno-heptose 7-phosphate: step 3/4. Functionally, catalyzes the phosphorylation of D-glycero-D-manno-heptose 7-phosphate at the C-1 position to selectively form D-glycero-beta-D-manno-heptose-1,7-bisphosphate. Catalyzes the ADP transfer from ATP to D-glycero-beta-D-manno-heptose 1-phosphate, yielding ADP-D-glycero-beta-D-manno-heptose. This Escherichia coli O9:H4 (strain HS) protein is Bifunctional protein HldE.